A 334-amino-acid polypeptide reads, in one-letter code: MEQNSRALIDGFNRKIDYLRMSVTDRCDFRCVYCMAEDMQFLPRQQILSLEELFQVAERFVALGTRKIRLTGGEPLVRQGIVDLCGRIAALPGLRELCLTSNGSQLGRLAQPLFDAGVTRLNISLDSLDADRFKQLTRTGDLAQVIAGIDAARQAGFKRTKLNCVVLKGRNDHELVDLVRFAIERELDITFIEEMPLGVISEHERGESFCSSDEVRARLAEQFTLVESTESSMGPARYWRLAEAANTRVGFISPHSHNFCATCNRVRLTVEGRLLLCLGNEHSVDLKHVLRAHPGNPERLEKAIRDSLHLKPYRHHFEVGGDVQILRFMNMTGG.

Residues 11–236 (GFNRKIDYLR…ESTESSMGPA (226 aa)) enclose the Radical SAM core domain. Arg-20 is a binding site for GTP. [4Fe-4S] cluster contacts are provided by Cys-27 and Cys-31. Tyr-33 serves as a coordination point for S-adenosyl-L-methionine. Cys-34 provides a ligand contact to [4Fe-4S] cluster. Arg-69 lines the GTP pocket. Gly-73 contacts S-adenosyl-L-methionine. Thr-100 is a binding site for GTP. Ser-124 lines the S-adenosyl-L-methionine pocket. Lys-161 is a binding site for GTP. An S-adenosyl-L-methionine-binding site is contributed by Met-195. [4Fe-4S] cluster is bound by residues Cys-260 and Cys-263. 265 to 267 (RVR) lines the GTP pocket. Cys-277 contributes to the [4Fe-4S] cluster binding site.

This sequence belongs to the radical SAM superfamily. MoaA family. As to quaternary structure, monomer and homodimer. [4Fe-4S] cluster serves as cofactor.

The enzyme catalyses GTP + AH2 + S-adenosyl-L-methionine = (8S)-3',8-cyclo-7,8-dihydroguanosine 5'-triphosphate + 5'-deoxyadenosine + L-methionine + A + H(+). Its pathway is cofactor biosynthesis; molybdopterin biosynthesis. In terms of biological role, catalyzes the cyclization of GTP to (8S)-3',8-cyclo-7,8-dihydroguanosine 5'-triphosphate. In Pseudomonas putida (strain ATCC 47054 / DSM 6125 / CFBP 8728 / NCIMB 11950 / KT2440), this protein is GTP 3',8-cyclase.